The following is a 159-amino-acid chain: Ribosome maturation factor RimP (159 aa).

It belongs to the RimP family.

Its subcellular location is the cytoplasm. Its function is as follows. Required for maturation of 30S ribosomal subunits. The sequence is that of Ribosome maturation factor RimP from Bordetella avium (strain 197N).